The primary structure comprises 198 residues: Proteasome subunit beta 1 (198 aa).

Positions 1–8 are cleaved as a propeptide — removed in mature form; by autocatalysis; the sequence is MSMYMPGA. T9 serves as the catalytic Nucleophile.

This sequence belongs to the peptidase T1B family. The 20S proteasome core is composed of 14 alpha and 14 beta subunits that assemble into four stacked heptameric rings, resulting in a barrel-shaped structure. The two inner rings, each composed of seven catalytic beta subunits, are sandwiched by two outer rings, each composed of seven alpha subunits. The catalytic chamber with the active sites is on the inside of the barrel. Has a gated structure, the ends of the cylinder being occluded by the N-termini of the alpha-subunits. Is capped at one or both ends by the proteasome regulatory ATPase, PAN.

Its subcellular location is the cytoplasm. The catalysed reaction is Cleavage of peptide bonds with very broad specificity.. With respect to regulation, the formation of the proteasomal ATPase PAN-20S proteasome complex, via the docking of the C-termini of PAN into the intersubunit pockets in the alpha-rings, triggers opening of the gate for substrate entry. Interconversion between the open-gate and close-gate conformations leads to a dynamic regulation of the 20S proteasome proteolysis activity. Its function is as follows. Component of the proteasome core, a large protease complex with broad specificity involved in protein degradation. The polypeptide is Proteasome subunit beta 1 (Nitrosopumilus maritimus (strain SCM1)).